The following is a 127-amino-acid chain: Large ribosomal subunit protein bL17 (127 aa).

It belongs to the bacterial ribosomal protein bL17 family. In terms of assembly, part of the 50S ribosomal subunit. Contacts protein L32.

This is Large ribosomal subunit protein bL17 from Chromohalobacter salexigens (strain ATCC BAA-138 / DSM 3043 / CIP 106854 / NCIMB 13768 / 1H11).